Consider the following 358-residue polypeptide: 3-isopropylmalate dehydrogenase (358 aa).

77–90 (GPKWTNLPPDQQPE) serves as a coordination point for NAD(+). The substrate site is built by Arg98, Arg108, Arg137, and Asp226. Mg(2+) is bound by residues Asp226, Asp250, and Asp254. NAD(+) is bound at residue 284–296 (GSAPDIAGKGIAN).

The protein belongs to the isocitrate and isopropylmalate dehydrogenases family. LeuB type 1 subfamily. In terms of assembly, homodimer. Requires Mg(2+) as cofactor. Mn(2+) is required as a cofactor.

The protein localises to the cytoplasm. It carries out the reaction (2R,3S)-3-isopropylmalate + NAD(+) = 4-methyl-2-oxopentanoate + CO2 + NADH. It participates in amino-acid biosynthesis; L-leucine biosynthesis; L-leucine from 3-methyl-2-oxobutanoate: step 3/4. Functionally, catalyzes the oxidation of 3-carboxy-2-hydroxy-4-methylpentanoate (3-isopropylmalate) to 3-carboxy-4-methyl-2-oxopentanoate. The product decarboxylates to 4-methyl-2 oxopentanoate. In Haemophilus influenzae (strain 86-028NP), this protein is 3-isopropylmalate dehydrogenase.